Reading from the N-terminus, the 331-residue chain is Ketol-acid reductoisomerase (NADP(+)) (331 aa).

A KARI N-terminal Rossmann domain is found at 2–182; the sequence is AKMYYDSDCN…GAGRAGILET (181 aa). Residues 25 to 28, S51, and 83 to 86 contribute to the NADP(+) site; these read YGSQ and DEKQ. The active site involves H108. G134 is an NADP(+) binding site. In terms of domain architecture, KARI C-terminal knotted spans 183-329; the sequence is TFREETETDL…AELRKMMSWL (147 aa). Mg(2+) is bound by residues D191, E195, E227, and E231. Residue S252 coordinates substrate.

The protein belongs to the ketol-acid reductoisomerase family. The cofactor is Mg(2+).

It catalyses the reaction (2R)-2,3-dihydroxy-3-methylbutanoate + NADP(+) = (2S)-2-acetolactate + NADPH + H(+). The enzyme catalyses (2R,3R)-2,3-dihydroxy-3-methylpentanoate + NADP(+) = (S)-2-ethyl-2-hydroxy-3-oxobutanoate + NADPH + H(+). It functions in the pathway amino-acid biosynthesis; L-isoleucine biosynthesis; L-isoleucine from 2-oxobutanoate: step 2/4. It participates in amino-acid biosynthesis; L-valine biosynthesis; L-valine from pyruvate: step 2/4. Its function is as follows. Involved in the biosynthesis of branched-chain amino acids (BCAA). Catalyzes an alkyl-migration followed by a ketol-acid reduction of (S)-2-acetolactate (S2AL) to yield (R)-2,3-dihydroxy-isovalerate. In the isomerase reaction, S2AL is rearranged via a Mg-dependent methyl migration to produce 3-hydroxy-3-methyl-2-ketobutyrate (HMKB). In the reductase reaction, this 2-ketoacid undergoes a metal-dependent reduction by NADPH to yield (R)-2,3-dihydroxy-isovalerate. This Ruminiclostridium cellulolyticum (strain ATCC 35319 / DSM 5812 / JCM 6584 / H10) (Clostridium cellulolyticum) protein is Ketol-acid reductoisomerase (NADP(+)).